A 121-amino-acid polypeptide reads, in one-letter code: Small ribosomal subunit protein uS13 (121 aa).

Residues 92 to 121 form a disordered region; the sequence is RKGLPMRGQRTRTNARTRKGPRRAAQALKK.

This sequence belongs to the universal ribosomal protein uS13 family. As to quaternary structure, part of the 30S ribosomal subunit. Forms a loose heterodimer with protein S19. Forms two bridges to the 50S subunit in the 70S ribosome.

Located at the top of the head of the 30S subunit, it contacts several helices of the 16S rRNA. In the 70S ribosome it contacts the 23S rRNA (bridge B1a) and protein L5 of the 50S subunit (bridge B1b), connecting the 2 subunits; these bridges are implicated in subunit movement. Contacts the tRNAs in the A and P-sites. This Burkholderia thailandensis (strain ATCC 700388 / DSM 13276 / CCUG 48851 / CIP 106301 / E264) protein is Small ribosomal subunit protein uS13.